A 343-amino-acid polypeptide reads, in one-letter code: N(4)-bis(aminopropyl)spermidine synthase (343 aa).

It belongs to the branched-chain polyamine synthase family.

It is found in the cytoplasm. It catalyses the reaction 2 S-adenosyl 3-(methylsulfanyl)propylamine + spermidine = N(4)-bis(aminopropyl)spermidine + 2 S-methyl-5'-thioadenosine + 2 H(+). The protein operates within amine and polyamine biosynthesis. Involved in the biosynthesis of branched-chain polyamines, which support the growth of thermophiles under high-temperature conditions. Catalyzes the sequential condensation of spermidine with the aminopropyl groups of decarboxylated S-adenosylmethionines to produce N(4)-bis(aminopropyl)spermidine via N(4)-aminopropylspermidine. The protein is N(4)-bis(aminopropyl)spermidine synthase of Thermus thermophilus.